Reading from the N-terminus, the 617-residue chain is mRNA export factor MEX67 (617 aa).

Over residues 1-10 (MSYRGRGGGY) the composition is skewed to gly residues. The disordered stretch occupies residues 1–24 (MSYRGRGGGYNNNRGQFSSGPHQH). 3 LRR repeats span residues 185 to 206 (DVDS…TSMA), 211 to 232 (KLQN…ETWR), and 237 to 258 (FLRE…AEIQ). Residues 309–499 (LATNFIANYL…MIVASDTLLI (191 aa)) enclose the NTF2 domain. Disordered stretches follow at residues 442-469 (EVDG…HKRI) and 513-554 (LPSN…TTAD). Composition is skewed to low complexity over residues 445–459 (GSAS…GGSR) and 526–542 (ATST…TTPQ). One can recognise a TAP-C domain in the interval 565–617 (QIQQELLVKILLETKLNINYGIMLCEQSNWDYQQASVNFKNSAASLPSDAFVQ).

Belongs to the NXF family. In terms of assembly, interacts with nucleoporin complex protein MTR2.

Its subcellular location is the nucleus. It localises to the cytoplasm. Involved in the export of mRNA from the nucleus to the cytoplasm. In Candida albicans (strain SC5314 / ATCC MYA-2876) (Yeast), this protein is mRNA export factor MEX67.